We begin with the raw amino-acid sequence, 72 residues long: Crustacean hyperglycemic hormone (72 aa).

At Q1 the chain carries Pyrrolidone carboxylic acid. A D-phenylalanine modification is found at F3. Cystine bridges form between C7–C43, C23–C39, and C26–C52. V72 carries the post-translational modification Valine amide.

As to expression, produced by the medulla terminalis X-organ in the eyestalks and transported to the sinus gland where they are stored and released.

It localises to the secreted. Its function is as follows. Hormone found in the sinus gland of isopods and decapods which controls the blood sugar level. Has a secretagogue action over the amylase released from the midgut gland. May act as a stress hormone and may be involved in the control of molting and reproduction. The chain is Crustacean hyperglycemic hormone from Astacus astacus (Noble crayfish).